A 556-amino-acid polypeptide reads, in one-letter code: MSYQVLASSQNDKVSKIVRPTTTYQPSIWGERFLQYSISDQDFSYKKQRVDELKEVVRREVFLECYDNVSYVLKIVDDVQRLGLSYHFENEIEKALQHIYDNTIHQNHKDEDLHDTSTRFRLLRQHGFMVSSNIFKIFKDEQGNFKECLITDIPGLLSLYEASHLSYIGENILDEALAFTTTHLHQFVKNEKTHPLSNEVLLALQRPIRKSLERLHARHYISSYENKICHNKTLLELAKLDFNLLQCLHRKELSQISRWWKEIDFVHKLPFARDRIVELYLWLLGVFHEPELSLARIISTKVIALASVADDIYDAYGTFEELELLTESINRWDLNCADQLRPECLQTFYKVLLNCYEEFESELGKEESYKVYYAREAMKRLLGAYFSEARWLHEGYFPSFDEHLKVSLISCGYTMMIVTSLIGMKDCVTKQDFEWLSKDPKIMRDCNILCRFMDDIVSHKFEQQRDHSPSTVESYMRQYGVSEQEACDELRKQVINSWKEINKAFLRPSNVPYPVLSLVLNFSRVMDLLYKDGDGYTHIGKETKNSVVALLIDQIP.

Residues R273, D310, D314, R451, and D454 each coordinate (2E,6E)-farnesyl diphosphate. Mg(2+) is bound by residues D310 and D314. A DDXXD motif motif is present at residues 310-314 (DDIYD). Positions 454, 458, and 462 each coordinate Mg(2+).

The protein belongs to the terpene synthase family. Tpsb subfamily. Requires Mg(2+) as cofactor. Mn(2+) is required as a cofactor. Expressed in glandular trichomes two to four weeks after flowering onset.

It carries out the reaction (2E,6E)-farnesyl diphosphate = (-)-(E)-beta-caryophyllene + diphosphate. It catalyses the reaction (2E,6E)-farnesyl diphosphate = alpha-humulene + diphosphate. It functions in the pathway secondary metabolite biosynthesis; terpenoid biosynthesis. In terms of biological role, involved in sesquiterpene olefins biosynthesis, constituants of cannabinoids and terpenoids-rich resins. Catalyzes mainly the conversion of (2E)-farnesyl diphosphate to beta-caryophyllene and alpha-humulene. Can also use (2E)-geranyl diphosphate as substrate with low efficiency. The polypeptide is Beta-caryophyllene synthase TPS9FN (Cannabis sativa (Hemp)).